A 373-amino-acid chain; its full sequence is Acyl-CoA dehydrogenase FadE27 (373 aa).

FAD is bound by residues Arg-251, His-327, and Gly-331.

Belongs to the acyl-CoA dehydrogenase family. In terms of assembly, heterotetramer (dimer of heterodimers) composed of FadE26 and FadE27. Requires FAD as cofactor.

It carries out the reaction (25S)-3-oxocholest-4-en-26-oyl-CoA + A = 3-oxo-cholest-4,24-dien-26-oyl-CoA + AH2. It functions in the pathway steroid metabolism; cholesterol degradation. Uncompetitively inhibited by high concentration of 3-OCS-CoA. Functionally, involved in the first cycle of side chain dehydrogenation in the beta-oxidation of cholesterol catabolism. It contributes partly to the virulence by increasing the efficiency of beta-oxidation. Catalyzes the dehydrogenation of acyl-CoA ester side chains of (25S)-3-oxo-cholest-4-en-26-oyl-CoA (3-OCS-CoA) to yield (24E)-3-oxo-cholest-4,24-dien-26-oyl-CoA. Also able to dehydrogenate steroyl-CoA such as 3-oxo-chol-4-en-24-oyl-CoA (3-OCO-CoA) as well as 3-oxo-4-pregnene-20-carboxyl-CoA (3-OPC-CoA). It dehydrogenates only (25S)-OCS-CoA diastereomer. The protein is Acyl-CoA dehydrogenase FadE27 (fadE27) of Mycobacterium tuberculosis (strain ATCC 25618 / H37Rv).